Reading from the N-terminus, the 412-residue chain is Argininosuccinate synthase (412 aa).

ATP-binding positions include 20-28 (AYSGGLDTS) and A48. L-citrulline-binding residues include Y100 and S105. ATP is bound at residue G130. Residues T132, N136, and D137 each coordinate L-aspartate. An L-citrulline-binding site is contributed by N136. The L-citrulline site is built by R140, S189, S198, E274, and Y286.

It belongs to the argininosuccinate synthase family. Type 1 subfamily. Homotetramer.

Its subcellular location is the cytoplasm. It catalyses the reaction L-citrulline + L-aspartate + ATP = 2-(N(omega)-L-arginino)succinate + AMP + diphosphate + H(+). It participates in amino-acid biosynthesis; L-arginine biosynthesis; L-arginine from L-ornithine and carbamoyl phosphate: step 2/3. The polypeptide is Argininosuccinate synthase (Shewanella halifaxensis (strain HAW-EB4)).